We begin with the raw amino-acid sequence, 244 residues long: 1-(5-phosphoribosyl)-5-[(5-phosphoribosylamino)methylideneamino] imidazole-4-carboxamide isomerase (244 aa).

Aspartate 10 acts as the Proton acceptor in catalysis. The active-site Proton donor is the aspartate 132.

Belongs to the HisA/HisF family.

It localises to the cytoplasm. The enzyme catalyses 1-(5-phospho-beta-D-ribosyl)-5-[(5-phospho-beta-D-ribosylamino)methylideneamino]imidazole-4-carboxamide = 5-[(5-phospho-1-deoxy-D-ribulos-1-ylimino)methylamino]-1-(5-phospho-beta-D-ribosyl)imidazole-4-carboxamide. It functions in the pathway amino-acid biosynthesis; L-histidine biosynthesis; L-histidine from 5-phospho-alpha-D-ribose 1-diphosphate: step 4/9. The protein is 1-(5-phosphoribosyl)-5-[(5-phosphoribosylamino)methylideneamino] imidazole-4-carboxamide isomerase of Xanthomonas oryzae pv. oryzae (strain MAFF 311018).